The primary structure comprises 417 residues: Serine hydroxymethyltransferase (417 aa).

(6S)-5,6,7,8-tetrahydrofolate contacts are provided by residues Leu120 and 124-126 (GHL). Lys229 bears the N6-(pyridoxal phosphate)lysine mark.

This sequence belongs to the SHMT family. In terms of assembly, homodimer. It depends on pyridoxal 5'-phosphate as a cofactor.

It is found in the cytoplasm. It catalyses the reaction (6R)-5,10-methylene-5,6,7,8-tetrahydrofolate + glycine + H2O = (6S)-5,6,7,8-tetrahydrofolate + L-serine. Its pathway is one-carbon metabolism; tetrahydrofolate interconversion. The protein operates within amino-acid biosynthesis; glycine biosynthesis; glycine from L-serine: step 1/1. Its function is as follows. Catalyzes the reversible interconversion of serine and glycine with tetrahydrofolate (THF) serving as the one-carbon carrier. This reaction serves as the major source of one-carbon groups required for the biosynthesis of purines, thymidylate, methionine, and other important biomolecules. Also exhibits THF-independent aldolase activity toward beta-hydroxyamino acids, producing glycine and aldehydes, via a retro-aldol mechanism. In Anaeromyxobacter dehalogenans (strain 2CP-C), this protein is Serine hydroxymethyltransferase.